Here is a 231-residue protein sequence, read N- to C-terminus: Cytidylate kinase (231 aa).

16–24 serves as a coordination point for ATP; the sequence is GPAASGKST. Positions 176–205 are disordered; sequence PDLDSLEQEITKRDRDDAEREHAPLKKHPE. Residues 184 to 205 are compositionally biased toward basic and acidic residues; sequence EITKRDRDDAEREHAPLKKHPE.

The protein belongs to the cytidylate kinase family. Type 1 subfamily.

It localises to the cytoplasm. It carries out the reaction CMP + ATP = CDP + ADP. The enzyme catalyses dCMP + ATP = dCDP + ADP. This Pelodictyon phaeoclathratiforme (strain DSM 5477 / BU-1) protein is Cytidylate kinase.